A 1462-amino-acid chain; its full sequence is Iron-sulfur cluster assembly protein SufD (1462 aa).

Disordered stretches follow at residues 500-525 (IDNNQNDDIDNNNNNNNNNNNCDNPY), 938-970 (NQNKENENENENNSQSDNNTTKQHIQDEQGTEQ), and 1111-1153 (NIPS…EKEE). Low complexity predominate over residues 510-523 (NNNNNNNNNNNCDN). The span at 961 to 970 (HIQDEQGTEQ) shows a compositional bias: basic and acidic residues. The segment covering 1111-1136 (NIPSNNKQTNSNNNSEYNNEQNNCSN) has biased composition (low complexity).

Belongs to the iron-sulfur cluster assembly SufBD family. Component of a complex composed of SufB, SufC and SufD in a stoichiometric ratio of 1:2:1. Interacts with SufB. Interacts with SufC; the interaction enhances the ATPase activity of SufC. Proteolytically cleaved.

It localises to the plastid. The protein localises to the apicoplast. It participates in cofactor biosynthesis; iron-sulfur cluster biosynthesis. Functionally, participates in the sulfur mobilization (SUF) pathway for iron-sulfur (Fe-S) cluster biogenesis. As part of a complex consisting of SufB-SufC(2)-SufD, involved in assembly of [4Fe-4S] clusters. Enhances the ATPase activity of SufC. This chain is Iron-sulfur cluster assembly protein SufD, found in Plasmodium falciparum (isolate 3D7).